The primary structure comprises 456 residues: MSKSIEKMISHLKNQGFVFQGSEIYGGLANSWDYGPLGCEVKNKLKKVWWDFFVKKNPLNIGLDSSIILNSKVWKASGHIDGFNDPLIDCKNCKSRWRADKLIEEFDPSINTGIMSNLQLEEYINQNNIVCKKCQKKDFTQIRKFALMFKTNQGVLEDDSSIVYLRPETAQGIFINFKNVQRSMRKKLPFGIGQIGKSFRNEITPGNFIFRTREFEQMELEFFFDPNDSNDWFKYWLEQIEIFLTQKISLDKNNYKIRENLKDELAHYALKTSDIEFNFPFGWGELWGISHRSDFDLKVHQNLSKEDLTVLKEENNQKILANVIEPSVGVERLMLAIFWQAYTEEQLEENNSRIVLKLPYNLAPYQVAITPLSKQLNQNANQLFLELLKDFDAIYDETGNIGKRYRRQDAIGTPFVITYDFQTLEDQKVTIRYRDTMKQERILISQLKDFLNSQFN.

Residues R98 and E168 each contribute to the substrate site. ATP-binding positions include 200–202, 210–215, 285–286, and 329–332; these read RNE, FRTREF, EL, and GVER. 215–219 provides a ligand contact to substrate; the sequence is FEQME. 325–329 contacts substrate; sequence EPSVG.

It belongs to the class-II aminoacyl-tRNA synthetase family. Homodimer.

Its subcellular location is the cytoplasm. It carries out the reaction tRNA(Gly) + glycine + ATP = glycyl-tRNA(Gly) + AMP + diphosphate. Functionally, catalyzes the attachment of glycine to tRNA(Gly). The sequence is that of Glycine--tRNA ligase from Mycoplasma capricolum subsp. capricolum (strain California kid / ATCC 27343 / NCTC 10154).